Reading from the N-terminus, the 431-residue chain is Cortical fragment-lytic enzyme (431 aa).

LysM domains follow at residues 2-46 and 51-95; these read QIYV…TIVI and QFYD…RLYI. A GH18 domain is found at 103–431; it reads IESNAYLEPR…QFNVVKKTFR (329 aa). Chitin contacts are provided by residues 148 to 149 and 174 to 177; these read VA and ENQA. E217 acts as the Proton donor in catalysis. Residues Y218, 280–283, and W406 contribute to the chitin site; that span reads MTYE.

This sequence belongs to the glycosyl hydrolase 18 family. Chitinase class II subfamily.

Its subcellular location is the spore coat. In terms of biological role, N-acetylglucosaminidase involved in cortex peptidoglycan degradation during germination. Cleaves only partially degraded spore peptidoglycans. Recognizes muramic acid delta-lactam residues specific to spore peptidoglycans. The chain is Cortical fragment-lytic enzyme from Bacillus subtilis (strain 168).